Consider the following 572-residue polypeptide: Proline--tRNA ligase (572 aa).

This sequence belongs to the class-II aminoacyl-tRNA synthetase family. ProS type 1 subfamily. As to quaternary structure, homodimer.

It is found in the cytoplasm. The enzyme catalyses tRNA(Pro) + L-proline + ATP = L-prolyl-tRNA(Pro) + AMP + diphosphate. Catalyzes the attachment of proline to tRNA(Pro) in a two-step reaction: proline is first activated by ATP to form Pro-AMP and then transferred to the acceptor end of tRNA(Pro). As ProRS can inadvertently accommodate and process non-cognate amino acids such as alanine and cysteine, to avoid such errors it has two additional distinct editing activities against alanine. One activity is designated as 'pretransfer' editing and involves the tRNA(Pro)-independent hydrolysis of activated Ala-AMP. The other activity is designated 'posttransfer' editing and involves deacylation of mischarged Ala-tRNA(Pro). The misacylated Cys-tRNA(Pro) is not edited by ProRS. The protein is Proline--tRNA ligase of Pectobacterium atrosepticum (strain SCRI 1043 / ATCC BAA-672) (Erwinia carotovora subsp. atroseptica).